The sequence spans 338 residues: Ketol-acid reductoisomerase (NADP(+)) (338 aa).

One can recognise a KARI N-terminal Rossmann domain in the interval 1-181 (MNVFYDKDAD…GGGRAGIIET (181 aa)). NADP(+) is bound by residues 24–27 (YGSQ), R47, and S52. Residue H107 is part of the active site. G133 is an NADP(+) binding site. Residues 182–327 (NFREETETDL…AKLRAMMPWI (146 aa)) form the KARI C-terminal knotted domain. D190, E194, E226, and E230 together coordinate Mg(2+). Residue S251 participates in substrate binding.

The protein belongs to the ketol-acid reductoisomerase family. Requires Mg(2+) as cofactor.

It catalyses the reaction (2R)-2,3-dihydroxy-3-methylbutanoate + NADP(+) = (2S)-2-acetolactate + NADPH + H(+). The enzyme catalyses (2R,3R)-2,3-dihydroxy-3-methylpentanoate + NADP(+) = (S)-2-ethyl-2-hydroxy-3-oxobutanoate + NADPH + H(+). It participates in amino-acid biosynthesis; L-isoleucine biosynthesis; L-isoleucine from 2-oxobutanoate: step 2/4. The protein operates within amino-acid biosynthesis; L-valine biosynthesis; L-valine from pyruvate: step 2/4. Its function is as follows. Involved in the biosynthesis of branched-chain amino acids (BCAA). Catalyzes an alkyl-migration followed by a ketol-acid reduction of (S)-2-acetolactate (S2AL) to yield (R)-2,3-dihydroxy-isovalerate. In the isomerase reaction, S2AL is rearranged via a Mg-dependent methyl migration to produce 3-hydroxy-3-methyl-2-ketobutyrate (HMKB). In the reductase reaction, this 2-ketoacid undergoes a metal-dependent reduction by NADPH to yield (R)-2,3-dihydroxy-isovalerate. This chain is Ketol-acid reductoisomerase (NADP(+)), found in Burkholderia cenocepacia (strain ATCC BAA-245 / DSM 16553 / LMG 16656 / NCTC 13227 / J2315 / CF5610) (Burkholderia cepacia (strain J2315)).